We begin with the raw amino-acid sequence, 119 residues long: Large ribosomal subunit protein bL20 (119 aa).

The protein belongs to the bacterial ribosomal protein bL20 family.

Its function is as follows. Binds directly to 23S ribosomal RNA and is necessary for the in vitro assembly process of the 50S ribosomal subunit. It is not involved in the protein synthesizing functions of that subunit. The polypeptide is Large ribosomal subunit protein bL20 (Xylella fastidiosa (strain M23)).